Reading from the N-terminus, the 412-residue chain is Translation initiation factor 2 subunit gamma (412 aa).

Residues 8–205 (QAEMNIGMVG…AMYEHFEPPE (198 aa)) form the tr-type G domain. Positions 17 to 24 (GHVDHGKT) are G1. Residues aspartate 20, threonine 24, glycine 45, and serine 47 each coordinate Mg(2+). GTP is bound at residue 20 to 25 (DHGKTT). The segment at 45-49 (GISIR) is G2. Zn(2+) is bound by residues cysteine 60, cysteine 63, cysteine 72, and cysteine 75. Residues 89–92 (DSPG) form a G3 region. Residues 145-148 (NKID) and 183-185 (SAQ) contribute to the GTP site. A G4 region spans residues 145–148 (NKID). The G5 stretch occupies residues 183 to 185 (SAQ).

It belongs to the TRAFAC class translation factor GTPase superfamily. Classic translation factor GTPase family. EIF2G subfamily. In terms of assembly, heterotrimer composed of an alpha, a beta and a gamma chain. Requires Mg(2+) as cofactor.

The enzyme catalyses GTP + H2O = GDP + phosphate + H(+). In terms of biological role, eIF-2 functions in the early steps of protein synthesis by forming a ternary complex with GTP and initiator tRNA. The chain is Translation initiation factor 2 subunit gamma from Methanopyrus kandleri (strain AV19 / DSM 6324 / JCM 9639 / NBRC 100938).